The primary structure comprises 464 residues: Na(+)/H(+) antiporter NhaA 1 (464 aa).

Helical transmembrane passes span 41-61, 85-105, 121-141, 150-170, 180-200, 207-227, 234-254, 329-349, 363-383, 399-419, and 428-448; these read GGLI…SPLA, LHHW…GLEL, VLPI…YMSL, GWGI…ALLA, FLVA…AVFY, SFLI…MIGI, FFVG…ATLA, VAFF…IDFG, VVFG…WLAI, IIGA…IAEL, and IIQA…AGYL.

The protein belongs to the NhaA Na(+)/H(+) (TC 2.A.33) antiporter family.

The protein resides in the cell inner membrane. The enzyme catalyses Na(+)(in) + 2 H(+)(out) = Na(+)(out) + 2 H(+)(in). In terms of biological role, na(+)/H(+) antiporter that extrudes sodium in exchange for external protons. This is Na(+)/H(+) antiporter NhaA 1 from Saccharophagus degradans (strain 2-40 / ATCC 43961 / DSM 17024).